A 402-amino-acid polypeptide reads, in one-letter code: S-adenosylmethionine synthase (402 aa).

Residue H16 coordinates ATP. Residue D18 participates in Mg(2+) binding. E44 contributes to the K(+) binding site. E57 and Q103 together coordinate L-methionine. The flexible loop stretch occupies residues 103–113 (QSPDIAQGVDT). ATP-binding positions include 178 to 180 (DGK), 249 to 250 (KF), D258, 264 to 265 (RK), A281, and K285. Residue D258 participates in L-methionine binding. An L-methionine-binding site is contributed by K289.

It belongs to the AdoMet synthase family. As to quaternary structure, homotetramer; dimer of dimers. Mg(2+) is required as a cofactor. The cofactor is K(+).

It localises to the cytoplasm. It catalyses the reaction L-methionine + ATP + H2O = S-adenosyl-L-methionine + phosphate + diphosphate. The protein operates within amino-acid biosynthesis; S-adenosyl-L-methionine biosynthesis; S-adenosyl-L-methionine from L-methionine: step 1/1. In terms of biological role, catalyzes the formation of S-adenosylmethionine (AdoMet) from methionine and ATP. The overall synthetic reaction is composed of two sequential steps, AdoMet formation and the subsequent tripolyphosphate hydrolysis which occurs prior to release of AdoMet from the enzyme. This chain is S-adenosylmethionine synthase, found in Mycobacterium sp. (strain JLS).